Consider the following 24-residue polypeptide: U1-poneritoxin-Na1a (24 aa).

Belongs to the non-disulfide-bridged peptide (NDBP) superfamily. Medium-length antimicrobial peptide (group 3) family. Ponericin-W subfamily. Expressed by the venom gland.

It localises to the secreted. Its subcellular location is the target cell membrane. In terms of biological role, has a broad spectrum of activity against both Gram-positive and Gram-negative bacteria and S.cerevisiae. Has insecticidal and hemolytic activities. May act by disrupting the integrity of the bacterial cell membrane. The protein is U1-poneritoxin-Na1a of Neoponera apicalis (Ant).